A 793-amino-acid polypeptide reads, in one-letter code: Probable phosphoketolase (793 aa).

This sequence belongs to the XFP family. It depends on thiamine diphosphate as a cofactor.

In Rhodopirellula baltica (strain DSM 10527 / NCIMB 13988 / SH1), this protein is Probable phosphoketolase.